The primary structure comprises 125 residues: Small ribosomal subunit protein mS41 (125 aa).

Residues 1–23 (MLFRRLFSSSVIVQAASKTSLRK) constitute a mitochondrion transit peptide.

Belongs to the mitochondrion-specific ribosomal protein mS41 family.

The protein localises to the mitochondrion. Involved in telomere length regulation. This is Small ribosomal subunit protein mS41 (FYV4) from Kluyveromyces lactis (strain ATCC 8585 / CBS 2359 / DSM 70799 / NBRC 1267 / NRRL Y-1140 / WM37) (Yeast).